The sequence spans 393 residues: Metal tolerance protein C2 (393 aa).

Positions 1–23 (MERSISFNPRGDNELPDDRSSDV) are disordered. Residues 1 to 113 (MERSISFNPR…VTSGNRQMKR (113 aa)) are Cytoplasmic-facing. The segment covering 11–21 (GDNELPDDRSS) has biased composition (basic and acidic residues). A helical transmembrane segment spans residues 114 to 134 (LFLLIALNVLYSTTELSIGIF). Over 135–139 (TGRVG) the chain is Vacuolar. Residues 140–160 (LVSDAFHLTFGCGLLTFSLFA) form a helical membrane-spanning segment. At 161–186 (MATSRKKPDHAYSYGYKRLEVLSAFT) the chain is on the cytoplasmic side. The chain crosses the membrane as a helical span at residues 187–207 (NALFLMFMSFSLAVEALHAFI). The Vacuolar segment spans residues 208-214 (QDESEHK). A helical transmembrane segment spans residues 215-235 (HYLIVSAVTNLLVNLLGVWFF). At 236 to 259 (RNYARVNIAYRKAEDMNYHSVCLH) the chain is on the cytoplasmic side. The chain crosses the membrane as a helical span at residues 260 to 280 (VISDSIRSAGLILASWLLSLG). The Vacuolar portion of the chain corresponds to 281 to 283 (VEN). Residues 284–304 (AEVLCLGLVSVTVFMLVMPLF) form a helical membrane-spanning segment. At 305–393 (KATGGVLLQM…QDLTLQTDYT (89 aa)) the chain is on the cytoplasmic side.

This sequence belongs to the cation diffusion facilitator (CDF) transporter (TC 2.A.4) family.

Its subcellular location is the vacuole membrane. Its function is as follows. Involved in sequestration of excess metal in the cytoplasm into vacuoles to maintain metal homeostasis. This chain is Metal tolerance protein C2 (MTPC2), found in Arabidopsis thaliana (Mouse-ear cress).